A 250-amino-acid chain; its full sequence is uncharacterized protein (250 aa).

Residues 1 to 17 (MRTLVLLSSVAILSTLA) form the signal peptide. 4 N-linked (GlcNAc...) asparagine glycosylation sites follow: asparagine 48, asparagine 159, asparagine 223, and asparagine 239.

It is found in the secreted. This is an uncharacterized protein from Caenorhabditis elegans.